The chain runs to 446 residues: Bifunctional protein GlmU (446 aa).

The segment at 1–226 is pyrophosphorylase; it reads MLAVAILAAG…PDEVNGINDR (226 aa). Residues 7–10, Lys21, Gln73, and 78–79 contribute to the UDP-N-acetyl-alpha-D-glucosamine site; these read LAAG and GT. Asp103 contacts Mg(2+). Residues Gly140, Glu155, Asn170, and Asn224 each contribute to the UDP-N-acetyl-alpha-D-glucosamine site. Asn224 contributes to the Mg(2+) binding site. The segment at 227-247 is linker; that stretch reads CQLANCEALLQERLRNYWMKE. The segment at 248-446 is N-acetyltransferase; it reads GVTFTDPASC…SKQLIKNGWQ (199 aa). Residues Arg329 and Lys347 each coordinate UDP-N-acetyl-alpha-D-glucosamine. The active-site Proton acceptor is the His359. Residues Tyr362 and Asn373 each contribute to the UDP-N-acetyl-alpha-D-glucosamine site. Acetyl-CoA-binding positions include Ala376, 382-383, Ala419, and Arg436; that span reads NY.

In the N-terminal section; belongs to the N-acetylglucosamine-1-phosphate uridyltransferase family. It in the C-terminal section; belongs to the transferase hexapeptide repeat family. Homotrimer. The cofactor is Mg(2+).

It localises to the cytoplasm. The enzyme catalyses alpha-D-glucosamine 1-phosphate + acetyl-CoA = N-acetyl-alpha-D-glucosamine 1-phosphate + CoA + H(+). The catalysed reaction is N-acetyl-alpha-D-glucosamine 1-phosphate + UTP + H(+) = UDP-N-acetyl-alpha-D-glucosamine + diphosphate. It functions in the pathway nucleotide-sugar biosynthesis; UDP-N-acetyl-alpha-D-glucosamine biosynthesis; N-acetyl-alpha-D-glucosamine 1-phosphate from alpha-D-glucosamine 6-phosphate (route II): step 2/2. It participates in nucleotide-sugar biosynthesis; UDP-N-acetyl-alpha-D-glucosamine biosynthesis; UDP-N-acetyl-alpha-D-glucosamine from N-acetyl-alpha-D-glucosamine 1-phosphate: step 1/1. Its pathway is bacterial outer membrane biogenesis; LPS lipid A biosynthesis. Its function is as follows. Catalyzes the last two sequential reactions in the de novo biosynthetic pathway for UDP-N-acetylglucosamine (UDP-GlcNAc). The C-terminal domain catalyzes the transfer of acetyl group from acetyl coenzyme A to glucosamine-1-phosphate (GlcN-1-P) to produce N-acetylglucosamine-1-phosphate (GlcNAc-1-P), which is converted into UDP-GlcNAc by the transfer of uridine 5-monophosphate (from uridine 5-triphosphate), a reaction catalyzed by the N-terminal domain. This Prochlorococcus marinus (strain MIT 9313) protein is Bifunctional protein GlmU.